We begin with the raw amino-acid sequence, 83 residues long: Normal mucosa of esophagus-specific gene 1 protein (83 aa).

It belongs to the complex I NDUFA4 subunit family. As to expression, strongly expressed in vertebrae, brain, intestine and stomach.

It is found in the nucleus. In Mus musculus (Mouse), this protein is Normal mucosa of esophagus-specific gene 1 protein (Nmes1).